The following is a 348-amino-acid chain: Dihydroorotase (348 aa).

Zn(2+) contacts are provided by His17 and His19. Substrate contacts are provided by residues 19 to 21 (HLR) and Asn45. Positions 103, 140, and 178 each coordinate Zn(2+). An N6-carboxylysine modification is found at Lys103. His140 lines the substrate pocket. Leu223 serves as a coordination point for substrate. Position 251 (Asp251) interacts with Zn(2+). The active site involves Asp251. His255 and Ala267 together coordinate substrate.

The protein belongs to the metallo-dependent hydrolases superfamily. DHOase family. Class II DHOase subfamily. Homodimer. It depends on Zn(2+) as a cofactor.

It carries out the reaction (S)-dihydroorotate + H2O = N-carbamoyl-L-aspartate + H(+). Its pathway is pyrimidine metabolism; UMP biosynthesis via de novo pathway; (S)-dihydroorotate from bicarbonate: step 3/3. Catalyzes the reversible cyclization of carbamoyl aspartate to dihydroorotate. The sequence is that of Dihydroorotase from Escherichia fergusonii (strain ATCC 35469 / DSM 13698 / CCUG 18766 / IAM 14443 / JCM 21226 / LMG 7866 / NBRC 102419 / NCTC 12128 / CDC 0568-73).